The chain runs to 419 residues: O-methyltransferase desB (419 aa).

Residues 255–256 (GG), aspartate 280, 306–307 (DF), and arginine 323 each bind S-adenosyl-L-methionine. The active-site Proton acceptor is the histidine 326.

The protein belongs to the class I-like SAM-binding methyltransferase superfamily. Cation-independent O-methyltransferase family. The cofactor is S-adenosyl-L-methionine.

The protein operates within secondary metabolite biosynthesis. Functionally, non-reducing polyketide synthase; part of the gene cluster that mediates the biosynthesis of the bicoumarin desertorin. The non-reducing polyketide synthase desS first catalyzes the formation of the pentaketidic 4,7-dihydroxy-5-methylcoumarin from acetyl coenzyme A and 4 malonyl coenzyme A molecules. Further O-methylation by desB leads to the formation of 7-demethylsiderin. Then, an oxidative phenol coupling catalyzed by the cytochrome P450 monooxygenase desC forms the 6,8'-dimer M-desertorin A via dimerization the monomeric precursor, 7-demethylsiderin. M-desertorin A is further converted to M-desertorin C. The chain is O-methyltransferase desB from Aspergillus desertorum (Emericella desertorum).